Here is a 152-residue protein sequence, read N- to C-terminus: MGAMWMKSMLLVLLLCMLMVTPMTGARSDNSGPWMWCDPEMGHKVSPLTRCRALVKLECVGNRVPEDVLRDCCQEVANISNEWCRCGDLGSMLRSVYAALGVGGGPEEVFPGCQKDVMKLLVAGVPALCNVPIPNEAAGTRGVCYWSASTDT.

A signal peptide spans Met1–Asn30.

Belongs to the protease inhibitor I6 (cereal trypsin/alpha-amylase inhibitor) family. In terms of assembly, homodimer. Five disulfide bonds, which are essential for the inhibitor activity, are probably present. In terms of tissue distribution, endosperm.

It localises to the secreted. In terms of biological role, could be involved in insect defense mechanisms. Inhibits insect-type alpha-amylase. This is Alpha-amylase inhibitor BDAI-1 (IAD1) from Hordeum vulgare (Barley).